The chain runs to 515 residues: Histidine ammonia-lyase (515 aa).

The 5-imidazolinone (Ala-Gly) cross-link spans 142–144 (ASG). 2,3-didehydroalanine (Ser) is present on serine 143.

It belongs to the PAL/histidase family. Post-translationally, contains an active site 4-methylidene-imidazol-5-one (MIO), which is formed autocatalytically by cyclization and dehydration of residues Ala-Ser-Gly.

It localises to the cytoplasm. The catalysed reaction is L-histidine = trans-urocanate + NH4(+). It participates in amino-acid degradation; L-histidine degradation into L-glutamate; N-formimidoyl-L-glutamate from L-histidine: step 1/3. The sequence is that of Histidine ammonia-lyase from Bradyrhizobium sp. (strain BTAi1 / ATCC BAA-1182).